The sequence spans 323 residues: Beta-ketoacyl-[acyl-carrier-protein] synthase III (323 aa).

Active-site residues include Cys114 and His250. Positions 251–255 (QANRR) are ACP-binding. Residue Asn280 is part of the active site.

This sequence belongs to the thiolase-like superfamily. FabH family. In terms of assembly, homodimer.

Its subcellular location is the cytoplasm. The enzyme catalyses malonyl-[ACP] + acetyl-CoA + H(+) = 3-oxobutanoyl-[ACP] + CO2 + CoA. Its pathway is lipid metabolism; fatty acid biosynthesis. Functionally, catalyzes the condensation reaction of fatty acid synthesis by the addition to an acyl acceptor of two carbons from malonyl-ACP. Catalyzes the first condensation reaction which initiates fatty acid synthesis and may therefore play a role in governing the total rate of fatty acid production. Possesses both acetoacetyl-ACP synthase and acetyl transacylase activities. Its substrate specificity determines the biosynthesis of branched-chain and/or straight-chain of fatty acids. In Rhodospirillum centenum (strain ATCC 51521 / SW), this protein is Beta-ketoacyl-[acyl-carrier-protein] synthase III.